The primary structure comprises 243 residues: Large ribosomal subunit protein uL2 (243 aa).

Disordered regions lie at residues 1 to 23 and 204 to 243; these read MGKR…PSHR and PFGG…GGRR. Over residues 228–243 the composition is skewed to basic residues; sequence KVGHIAARKTGRGGRR.

It belongs to the universal ribosomal protein uL2 family. Part of the 50S ribosomal subunit. Forms a bridge to the 30S subunit in the 70S ribosome.

One of the primary rRNA binding proteins. Required for association of the 30S and 50S subunits to form the 70S ribosome, for tRNA binding and peptide bond formation. It has been suggested to have peptidyltransferase activity; this is somewhat controversial. Makes several contacts with the 16S rRNA in the 70S ribosome. This chain is Large ribosomal subunit protein uL2, found in Methanopyrus kandleri (strain AV19 / DSM 6324 / JCM 9639 / NBRC 100938).